Here is a 305-residue protein sequence, read N- to C-terminus: Beta-lactamase (305 aa).

Positions 1-34 (MGTTGARPSRRAVLTAAAGAAVAGIPLGGSTAFA) form a signal peptide, tat-type signal. Catalysis depends on Ser-82, which acts as the Acyl-ester intermediate. 250 to 252 (KTG) is a substrate binding site.

Belongs to the class-A beta-lactamase family. Predicted to be exported by the Tat system. The position of the signal peptide cleavage has not been experimentally proven.

The catalysed reaction is a beta-lactam + H2O = a substituted beta-amino acid. The protein is Beta-lactamase of Streptomyces lavendulae.